Here is a 290-residue protein sequence, read N- to C-terminus: 4-hydroxy-tetrahydrodipicolinate synthase (290 aa).

T44 is a pyruvate binding site. Y132 functions as the Proton donor/acceptor in the catalytic mechanism. K160 functions as the Schiff-base intermediate with substrate in the catalytic mechanism. I202 lines the pyruvate pocket.

This sequence belongs to the DapA family. In terms of assembly, homotetramer; dimer of dimers.

The protein localises to the cytoplasm. It catalyses the reaction L-aspartate 4-semialdehyde + pyruvate = (2S,4S)-4-hydroxy-2,3,4,5-tetrahydrodipicolinate + H2O + H(+). It participates in amino-acid biosynthesis; L-lysine biosynthesis via DAP pathway; (S)-tetrahydrodipicolinate from L-aspartate: step 3/4. Catalyzes the condensation of (S)-aspartate-beta-semialdehyde [(S)-ASA] and pyruvate to 4-hydroxy-tetrahydrodipicolinate (HTPA). In Legionella pneumophila subsp. pneumophila (strain Philadelphia 1 / ATCC 33152 / DSM 7513), this protein is 4-hydroxy-tetrahydrodipicolinate synthase.